The sequence spans 54 residues: uncharacterized protein (54 aa).

It to B.subtilis XkdX.

This is an uncharacterized protein from Bacillus subtilis (strain 168).